Consider the following 544-residue polypeptide: MTPAEIKRLYQIIKVQLEYGLDELLPDHQLTKAPLLMRKSLFWIKNKHPEKPLGERLRLALQELGPVWIKFGQMMSTRRDLFPPHIADPLALLQDQVAPFDGQLAKEQMELALGGPLQNWFTEFDIKPLASASIAQVHTARLKDTNQEVVLKVIRPDIRPVIDSDLKLMHRMASIVAGAMPEARRLKPVEVVREYEKTLLDELDLRREAANAIQLRRNFEGSEELYVPEVFPDFSNETVMVSERIYGIQVSDIEGLEANGTNMKLLAERGVSVFFTQVFRDSFFHADMHPGNVFVKPEHPENPMWIGLDCGIVGTLNSEDKRYLAENFLAFFNRDYRRVAELHVDSGWVPADTNVDEFEFAIRIVCEPIFAKPLCEISFGHVLLNLFNTARRFNMEVQPQLVLLQKTLLYVEGLGRQLYPQLDLWETAKPFLEEWMMNQVGPQALVNAIKDRAPFWAEKLPELPELLYDSLRQGKAMNQRMDQLYQGYRHSKRQQATGKFLFGVGATLVVCSAILVDNAYEQLSIASGIAGVTFWLLSWRAYRR.

Residues Glu123–Leu501 enclose the Protein kinase domain. ATP-binding positions include Leu129–Val137 and Lys152. Catalysis depends on Asp287, which acts as the Proton acceptor. 2 helical membrane-spanning segments follow: residues Ala496–Val516 and Ala519–Trp539.

The protein belongs to the ABC1 family. UbiB subfamily.

The protein localises to the cell inner membrane. It participates in cofactor biosynthesis; ubiquinone biosynthesis [regulation]. Is probably a protein kinase regulator of UbiI activity which is involved in aerobic coenzyme Q (ubiquinone) biosynthesis. In Vibrio campbellii (strain ATCC BAA-1116), this protein is Probable protein kinase UbiB.